A 1199-amino-acid chain; its full sequence is Putative mitoferrin (1199 aa).

A helical transmembrane segment spans residues 32–52 (VPLWQHIFCGSIAGLMEHVFM). Residues Asn-92, Asn-171, Asn-208, Asn-268, Asn-326, Asn-353, Asn-443, Asn-499, Asn-539, Asn-649, Asn-708, Asn-715, and Asn-723 are each glycosylated (N-linked (GlcNAc...) asparagine). Residues 730–750 (GVNVVVLGCIPAHALYFSTFE) form a helical membrane-spanning segment. Residues Asn-763 and Asn-772 are each glycosylated (N-linked (GlcNAc...) asparagine). A Solcar 1 repeat occupies 792–873 (LNYFSIAVSG…ICTNEKMKKI (82 aa)). The next 2 helical transmembrane spans lie at 795 to 815 (FSIA…ITPI) and 845 to 865 (LYLS…IMIC). 7 N-linked (GlcNAc...) asparagine glycosylation sites follow: Asn-914, Asn-922, Asn-965, Asn-1013, Asn-1022, Asn-1041, and Asn-1056. The Solcar 2 repeat unit spans residues 1109 to 1191 (SYFVCAGIGG…WGTYETMKRF (83 aa)). Residues 1111–1131 (FVCAGIGGGIAAVLTNPLDVI) traverse the membrane as a helical segment.

This sequence belongs to the mitochondrial carrier (TC 2.A.29) family.

It localises to the mitochondrion membrane. Functionally, putative iron transporter. This chain is Putative mitoferrin, found in Plasmodium falciparum (isolate 3D7).